A 195-amino-acid chain; its full sequence is COMM domain-containing protein 3 (195 aa).

The 70-residue stretch at 124-193 folds into the COMM domain; that stretch reads HITDVSWRLE…DASKSLERAT (70 aa).

Belongs to the COMM domain-containing protein 3 family. Component of the commander complex consisting of the CCC subcomplex and the retriever subcomplex. Component of the CCC (COMMD/CCDC22/CCDC93) subcomplex consisting of COMMD1, COMMD2, COMMD3, COMMD4, COMMD5, COMMD6, COMMD7, COMMD8, COMMD9, COMMD10, CCDC22 and CCDC93; within the complex forms a heterodimer with COMMD2. Interacts with NFKB1/p105. Interacts with CCDC22, CCDC93, SCNN1B, CUL3, CUL4A, CUL4B, CUL5. As to expression, expressed in kidney collecting duct cells and in the nuclei of proximal convoluted tubule cells in the kidney cortex (at protein level).

The protein localises to the cytoplasm. The protein resides in the nucleus. Its function is as follows. Scaffold protein in the commander complex that is essential for endosomal recycling of transmembrane cargos; the commander complex is composed of the CCC subcomplex and the retriever subcomplex. May modulate activity of cullin-RING E3 ubiquitin ligase (CRL) complexes. May down-regulate activation of NF-kappa-B. Modulates Na(+) transport in epithelial cells by regulation of apical cell surface expression of amiloride-sensitive sodium channel (ENaC) subunits. The protein is COMM domain-containing protein 3 (Commd3) of Rattus norvegicus (Rat).